A 193-amino-acid chain; its full sequence is dTTP/UTP pyrophosphatase (193 aa).

The Proton acceptor role is filled by Asp-77.

The protein belongs to the Maf family. YhdE subfamily. A divalent metal cation serves as cofactor.

The protein localises to the cytoplasm. It carries out the reaction dTTP + H2O = dTMP + diphosphate + H(+). The enzyme catalyses UTP + H2O = UMP + diphosphate + H(+). Nucleoside triphosphate pyrophosphatase that hydrolyzes dTTP and UTP. May have a dual role in cell division arrest and in preventing the incorporation of modified nucleotides into cellular nucleic acids. In Phocaeicola vulgatus (strain ATCC 8482 / DSM 1447 / JCM 5826 / CCUG 4940 / NBRC 14291 / NCTC 11154) (Bacteroides vulgatus), this protein is dTTP/UTP pyrophosphatase.